The primary structure comprises 328 residues: Probable cell division protein WhiA (328 aa).

Positions 275-308 (SLEELGRLAEPPMTKDAVAGRIRRLLSMADKRAE) form a DNA-binding region, H-T-H motif.

The protein belongs to the WhiA family.

In terms of biological role, involved in cell division and chromosome segregation. This chain is Probable cell division protein WhiA, found in Corynebacterium jeikeium (strain K411).